Consider the following 571-residue polypeptide: Chitin-inducible gibberellin-responsive protein 1 (571 aa).

Positions 61-77 are enriched in polar residues; the sequence is TNTPDNQSSTETISAQP. 2 disordered regions span residues 61-80 and 151-180; these read TNTPDNQSSTETISAQPISP and QRSRTWSHESRQPLPGVGRSQFASGGYPTA. Positions 192-571 constitute a GRAS domain; that stretch reads ELREDPQIIV…RKLISASAWH (380 aa). A leucine repeat I (LRI) region spans residues 199 to 259; it reads IIVKQLLTRC…VARHGNSGTN (61 aa). The interval 278-343 is VHIID; it reads MRILYNICPY…GGPPRVRITG (66 aa). The VHIID motif lies at 309–313; the sequence is IHIID. The segment at 359–391 is leucine repeat II (LRII); sequence IVGKMLKSMSEEFKIPLEFTPLSVYATQVTKEM. Residues 400-494 are PFYRE; sequence LSVNFTLQLH…QHCLAKDIVN (95 aa). Residues 497–571 are SAW; the sequence is ACEGKDRVER…RKLISASAWH (75 aa).

It belongs to the GRAS family.

The protein localises to the nucleus. May play a regulatory role in the early step of oligosaccharide elicitor response, downstream of the membrane-associated high-affinity chitin-binding protein. The protein is Chitin-inducible gibberellin-responsive protein 1 (CIGR1) of Oryza sativa subsp. japonica (Rice).